A 245-amino-acid polypeptide reads, in one-letter code: UDP-2,3-diacylglucosamine hydrolase (245 aa).

Asp8, His10, Asp41, Asn80, and His115 together coordinate Mn(2+). Substrate is bound at residue 80-81; the sequence is NR. The substrate site is built by Asp123, Ser161, Lys165, Lys168, and His196. His196 and His198 together coordinate Mn(2+).

This sequence belongs to the LpxH family. Mn(2+) is required as a cofactor.

Its subcellular location is the cell inner membrane. The enzyme catalyses UDP-2-N,3-O-bis[(3R)-3-hydroxytetradecanoyl]-alpha-D-glucosamine + H2O = 2-N,3-O-bis[(3R)-3-hydroxytetradecanoyl]-alpha-D-glucosaminyl 1-phosphate + UMP + 2 H(+). It functions in the pathway glycolipid biosynthesis; lipid IV(A) biosynthesis; lipid IV(A) from (3R)-3-hydroxytetradecanoyl-[acyl-carrier-protein] and UDP-N-acetyl-alpha-D-glucosamine: step 4/6. Functionally, hydrolyzes the pyrophosphate bond of UDP-2,3-diacylglucosamine to yield 2,3-diacylglucosamine 1-phosphate (lipid X) and UMP by catalyzing the attack of water at the alpha-P atom. Involved in the biosynthesis of lipid A, a phosphorylated glycolipid that anchors the lipopolysaccharide to the outer membrane of the cell. In Psychromonas ingrahamii (strain DSM 17664 / CCUG 51855 / 37), this protein is UDP-2,3-diacylglucosamine hydrolase.